The primary structure comprises 248 residues: 1-(5-phosphoribosyl)-5-[(5-phosphoribosylamino)methylideneamino] imidazole-4-carboxamide isomerase (248 aa).

Catalysis depends on Asp-7, which acts as the Proton acceptor. Asp-131 (proton donor) is an active-site residue.

This sequence belongs to the HisA/HisF family.

It is found in the cytoplasm. It catalyses the reaction 1-(5-phospho-beta-D-ribosyl)-5-[(5-phospho-beta-D-ribosylamino)methylideneamino]imidazole-4-carboxamide = 5-[(5-phospho-1-deoxy-D-ribulos-1-ylimino)methylamino]-1-(5-phospho-beta-D-ribosyl)imidazole-4-carboxamide. The protein operates within amino-acid biosynthesis; L-histidine biosynthesis; L-histidine from 5-phospho-alpha-D-ribose 1-diphosphate: step 4/9. The polypeptide is 1-(5-phosphoribosyl)-5-[(5-phosphoribosylamino)methylideneamino] imidazole-4-carboxamide isomerase (Baumannia cicadellinicola subsp. Homalodisca coagulata).